Here is a 374-residue protein sequence, read N- to C-terminus: DNA replication and repair protein RecF (374 aa).

34–41 (GDNGAGKT) serves as a coordination point for ATP.

The protein belongs to the RecF family.

It localises to the cytoplasm. The RecF protein is involved in DNA metabolism; it is required for DNA replication and normal SOS inducibility. RecF binds preferentially to single-stranded, linear DNA. It also seems to bind ATP. This Rhizobium leguminosarum bv. trifolii (strain WSM2304) protein is DNA replication and repair protein RecF.